A 169-amino-acid polypeptide reads, in one-letter code: MSGTHKKLGARHKARKRAVDFLFEAEARDLDPVDLATERAELSGKDDSVAPVAPYTVTVVTGVAENLDRLDEVIRSHLQDWTLERLPAVDRAILRIAVWELFHATDVPPVVAVDEAVELAKQLSTDESPGFVNGILGQVVLVAPQVRSAAAATSRRTETAGGESNDAGS.

Positions 150–169 (AAATSRRTETAGGESNDAGS) are disordered.

It belongs to the NusB family.

In terms of biological role, involved in transcription antitermination. Required for transcription of ribosomal RNA (rRNA) genes. Binds specifically to the boxA antiterminator sequence of the ribosomal RNA (rrn) operons. This Rhodococcus jostii (strain RHA1) protein is Transcription antitermination protein NusB.